A 308-amino-acid chain; its full sequence is tRNA pseudouridine synthase B (308 aa).

The active-site Nucleophile is the Asp-47.

Belongs to the pseudouridine synthase TruB family. Type 1 subfamily.

It catalyses the reaction uridine(55) in tRNA = pseudouridine(55) in tRNA. Its function is as follows. Responsible for synthesis of pseudouridine from uracil-55 in the psi GC loop of transfer RNAs. This is tRNA pseudouridine synthase B from Xanthomonas campestris pv. campestris (strain 8004).